A 215-amino-acid chain; its full sequence is Rac-like GTP-binding protein ARAC10 (215 aa).

Residue 15 to 22 (GDGAVGKT) coordinates GTP. Residues 37–45 (YIPTVFDNF) carry the Effector region motif. Residues 62-66 (DTAGQ) and 120-123 (TKLD) contribute to the GTP site. S-palmitoyl cysteine attachment occurs at residues C202 and C208.

Belongs to the small GTPase superfamily. Rho family. In terms of assembly, component of the active ARAC10-IRC5-KIN13A complex. Interacts with ICR5.

The protein resides in the membrane. Its subcellular location is the cytoplasm. It localises to the cytoskeleton. Functionally, involved in local disassembly of cortical microtubules when associated with ICR5 and KIN13A. This chain is Rac-like GTP-binding protein ARAC10 (ARAC10), found in Arabidopsis thaliana (Mouse-ear cress).